A 505-amino-acid polypeptide reads, in one-letter code: RNA-splicing ligase RtcB homolog (505 aa).

Asp-119, Cys-122, His-227, His-259, and His-353 together coordinate Mn(2+). 226 to 230 lines the GMP pocket; that stretch reads NHYGE. Residues 353-354, 402-405, Ser-409, 428-431, and Lys-504 contribute to the GMP site; these read HN, GGTM, and HGAG. The active-site GMP-histidine intermediate is the His-428.

This sequence belongs to the RtcB family. As to quaternary structure, catalytic component of the tRNA-splicing ligase complex. The cofactor is Mn(2+).

It carries out the reaction a 3'-end 3'-phospho-ribonucleotide-RNA + a 5'-end dephospho-ribonucleoside-RNA + GTP = a ribonucleotidyl-ribonucleotide-RNA + GMP + diphosphate. The catalysed reaction is a 3'-end 2',3'-cyclophospho-ribonucleotide-RNA + a 5'-end dephospho-ribonucleoside-RNA + GTP + H2O = a ribonucleotidyl-ribonucleotide-RNA + GMP + diphosphate + H(+). In terms of biological role, catalytic subunit of the tRNA-splicing ligase complex that acts by directly joining spliced tRNA halves to mature-sized tRNAs by incorporating the precursor-derived splice junction phosphate into the mature tRNA as a canonical 3',5'-phosphodiester. May act as an RNA ligase with broad substrate specificity, and may function toward other RNAs. The chain is RNA-splicing ligase RtcB homolog from Brugia malayi (Filarial nematode worm).